A 625-amino-acid polypeptide reads, in one-letter code: MSAPTKPHARPQGAGNSVPNTVKPATQFPSKPAVAKLERVSPEQLTGAQSVIRSLEELDVEVIFGIPGGAVLLVYDPLFYSKKLRHVLVRHEQGAGHAASGYAHVTGKVGVCMATSGPGATNLVTPLADAQMDSVPVVAITGQVGRSLIGTDAFQEADISGITMPITKHNFLVRAGDDIPRVLAEAFHIASSGRPGAVLVDIPKDVLQGQCKFSWPPKMDLPGYKPNTKPHNRQIRAAAKLIADARKPVLYVGGGVIRGEATEQLRDLAELTGIPVVSTLMARGAFPDSHHQNLGMPGMHGTVAAVAALQRSDLLIALGTRFDDRVTGKLDSFAPDAKVIHADIDPAEIGKNRHADVPIVGDVKAVIVELIAMLRHYEVPGNIEMTDWWSYLDGVRKTYPLSYSPQSDGTLSPEYVIEKLGEIVGPEAVYVAGVGQHQMWAAQFISYEKPRTWLNSGGLGTMGFAIPAAMGAKIARPEAEVWAIDGDGCFQMTNQELATCAIEGAPIKVALINNGNLGMVRQWQALFYQERYSQTDLATHSHRIPDFVKLAEALGCVGLRCECEEDVVDVINQARAINNRPVVIDFIVGADAQVWPMVAAGASNDEIQAARGIRPLFDDESEGHV.

Residues 1–29 (MSAPTKPHARPQGAGNSVPNTVKPATQFP) form a disordered region. The span at 14-29 (AGNSVPNTVKPATQFP) shows a compositional bias: polar residues. Residue Glu92 participates in thiamine diphosphate binding. Residues Arg194, 300-321 (HGTV…LGTR), and 343-362 (DIDP…IVGD) contribute to the FAD site. The segment at 436–516 (QHQMWAAQFI…IKVALINNGN (81 aa)) is thiamine pyrophosphate binding. Positions 487 and 514 each coordinate Mg(2+).

The protein belongs to the TPP enzyme family. Mg(2+) is required as a cofactor. It depends on thiamine diphosphate as a cofactor.

The enzyme catalyses 2 pyruvate + H(+) = (2S)-2-acetolactate + CO2. It functions in the pathway amino-acid biosynthesis; L-isoleucine biosynthesis; L-isoleucine from 2-oxobutanoate: step 1/4. Its pathway is amino-acid biosynthesis; L-valine biosynthesis; L-valine from pyruvate: step 1/4. This chain is Acetolactate synthase (ilvB), found in Mycobacterium leprae (strain TN).